The following is a 125-amino-acid chain: Large ribosomal subunit protein bL12 (125 aa).

The protein belongs to the bacterial ribosomal protein bL12 family. In terms of assembly, homodimer. Part of the ribosomal stalk of the 50S ribosomal subunit. Forms a multimeric L10(L12)X complex, where L10 forms an elongated spine to which 2 to 4 L12 dimers bind in a sequential fashion. Binds GTP-bound translation factors.

In terms of biological role, forms part of the ribosomal stalk which helps the ribosome interact with GTP-bound translation factors. Is thus essential for accurate translation. The protein is Large ribosomal subunit protein bL12 of Polaromonas sp. (strain JS666 / ATCC BAA-500).